The sequence spans 103 residues: MQNQKIRIRLKAFDYRLIDQSALEIVDTAKRTGAVVRGPVPLPTRIERFNLLRSPHVNKTSRDQMEIRTHQRLMDIIDPTDKTVDALMKLDLPAGVDVEIKLQ.

The protein belongs to the universal ribosomal protein uS10 family. Part of the 30S ribosomal subunit.

Its function is as follows. Involved in the binding of tRNA to the ribosomes. This Azoarcus sp. (strain BH72) protein is Small ribosomal subunit protein uS10.